A 231-amino-acid chain; its full sequence is uncharacterized protein (231 aa).

A helical membrane pass occupies residues 86 to 106 (LIILFVIGLIITIIGLLMYEP).

It is found in the membrane. This is an uncharacterized protein from Methanocaldococcus jannaschii (strain ATCC 43067 / DSM 2661 / JAL-1 / JCM 10045 / NBRC 100440) (Methanococcus jannaschii).